The primary structure comprises 267 residues: Hydroxyethylthiazole kinase (267 aa).

M44 is a binding site for substrate. The ATP site is built by K120 and T166. A substrate-binding site is contributed by G193.

This sequence belongs to the Thz kinase family. The cofactor is Mg(2+).

The enzyme catalyses 5-(2-hydroxyethyl)-4-methylthiazole + ATP = 4-methyl-5-(2-phosphooxyethyl)-thiazole + ADP + H(+). The protein operates within cofactor biosynthesis; thiamine diphosphate biosynthesis; 4-methyl-5-(2-phosphoethyl)-thiazole from 5-(2-hydroxyethyl)-4-methylthiazole: step 1/1. Functionally, catalyzes the phosphorylation of the hydroxyl group of 4-methyl-5-beta-hydroxyethylthiazole (THZ). The protein is Hydroxyethylthiazole kinase of Desulfitobacterium hafniense (strain DSM 10664 / DCB-2).